The sequence spans 200 residues: Dephospho-CoA kinase (200 aa).

The DPCK domain occupies 4 to 200 (VIGLTGGIGS…QKYIKMSHLY (197 aa)). 12–17 (GSGKTT) contributes to the ATP binding site.

Belongs to the CoaE family.

Its subcellular location is the cytoplasm. It carries out the reaction 3'-dephospho-CoA + ATP = ADP + CoA + H(+). It functions in the pathway cofactor biosynthesis; coenzyme A biosynthesis; CoA from (R)-pantothenate: step 5/5. Functionally, catalyzes the phosphorylation of the 3'-hydroxyl group of dephosphocoenzyme A to form coenzyme A. The protein is Dephospho-CoA kinase of Photobacterium profundum (strain SS9).